The chain runs to 345 residues: UPF0284 protein STK_21430 (345 aa).

It belongs to the UPF0284 family.

The sequence is that of UPF0284 protein STK_21430 from Sulfurisphaera tokodaii (strain DSM 16993 / JCM 10545 / NBRC 100140 / 7) (Sulfolobus tokodaii).